An 852-amino-acid polypeptide reads, in one-letter code: MKPMLKDFSNLLLVVLCDYVLGEAEYLLLREPGHVALSNDTVYVDFQYFDGANGTLRNVSVLLLEANTNQTVTTKYLLTNQSQGTLKFECFYFKEAGDYWFTMTPEATDNSTPFPWWEKSAFLKVEWPVFHVDLNRSAKAAEGTFQVGLFTSQPLCPFPVDKPNIVVDVIFTNSLPEARRNSRQPLEIRTSKRTELAQGQWVEFGCAPLGPEAYVTVVLKLLGRDSVITSTGPIDLAQKFGYKLVMVPELTCESGVEVTVLPPPCTFVQGVVTVFKEAPRYPGKRTIHLAENSLPLGERRTIFNCTLFDMGKNKYCFDFGISSRSHFSAKEECMLIQRNTETWGLWQPWSQCSATCGDGVRERRRVCLTSFPSSPVCPGMSLEASLCSLEECAAFQPSSPSPLQPQGPVKSNNIVTVTGISLCLFIIIATVLITLWRRFGRPAKCSTPARHNSIHSPSFRKNSDEENICELSEQRGSFSDGGDGPTGSPGDTGIPLTYRRSGPVPPEDDASGSESFQSNAQKIIPPLFSYRLAQQQLKEMKKKGLTETTKVYHVSQSPLTDTAIDAAPSAPLDLESPEEAAANKFRIKSPFPEQPAVSAGERPPSRLDLNVTQASCAISPSQTLIRKSQARHVGSRGGPSERSHARNAHFRRTASFHEARQARPFRERSMSTLTPRQAPAYSSRTRTCEQAEDRFRPQSRGAHLFPEKLEHFQEASGTRGPLNPLPKSYTLGQPLRKPDLGDHQAGLVAGIERTEPHRARRGPSPSHKSVSRKQSSPISPKDNYQRVSSLSPSQCRKDKCQSFPTHPEFAFYDNTSFGLTEAEQRMLDLPGYFGSNEEDETTSTLSVEKLVI.

A signal peptide spans 1 to 24 (MKPMLKDFSNLLLVVLCDYVLGEA). The Extracellular portion of the chain corresponds to 25–413 (EYLLLREPGH…QPQGPVKSNN (389 aa)). N-linked (GlcNAc...) asparagine glycosylation is found at Asn39, Asn53, Asn58, Asn69, Asn80, Asn135, and Asn304. The TSP type-1 domain occupies 340–393 (TETWGLWQPWSQCSATCGDGVRERRRVCLTSFPSSPVCPGMSLEASLCSLEECA). 3 disulfide bridges follow: Cys352-Cys387, Cys356-Cys392, and Cys367-Cys377. The helical transmembrane segment at 414-434 (IVTVTGISLCLFIIIATVLIT) threads the bilayer. Over 435–852 (LWRRFGRPAK…STLSVEKLVI (418 aa)) the chain is Cytoplasmic. Disordered stretches follow at residues 444–517 (KCST…ESFQ) and 624–799 (LIRK…RKDK). Ser463 is modified (phosphoserine). Positions 645-654 (ARNAHFRRTA) are enriched in basic residues. A compositionally biased stretch (basic and acidic residues) spans 655–669 (SFHEARQARPFRERS). The span at 670-685 (MSTLTPRQAPAYSSRT) shows a compositional bias: polar residues. A compositionally biased stretch (basic and acidic residues) spans 686 to 696 (RTCEQAEDRFR). Composition is skewed to polar residues over residues 766 to 778 (SHKS…SSPI) and 785 to 794 (QRVSSLSPSQ).

Part of a complex composed of THSD1, PTK2/FAK1, TLN1 and VCL. Interacts with TLN1.

It localises to the endosome membrane. The protein resides in the cell junction. Its subcellular location is the focal adhesion. It is found in the membrane. The protein localises to the secreted. Is a positive regulator of nascent focal adhesion assembly, involved in the modulation of endothelial cell attachment to the extracellular matrix. This is Thrombospondin type-1 domain-containing protein 1 (THSD1) from Homo sapiens (Human).